The chain runs to 257 residues: Imidazole glycerol phosphate synthase subunit HisF (257 aa).

Active-site residues include Asp-11 and Asp-130.

It belongs to the HisA/HisF family. Heterodimer of HisH and HisF.

Its subcellular location is the cytoplasm. It catalyses the reaction 5-[(5-phospho-1-deoxy-D-ribulos-1-ylimino)methylamino]-1-(5-phospho-beta-D-ribosyl)imidazole-4-carboxamide + L-glutamine = D-erythro-1-(imidazol-4-yl)glycerol 3-phosphate + 5-amino-1-(5-phospho-beta-D-ribosyl)imidazole-4-carboxamide + L-glutamate + H(+). It functions in the pathway amino-acid biosynthesis; L-histidine biosynthesis; L-histidine from 5-phospho-alpha-D-ribose 1-diphosphate: step 5/9. Functionally, IGPS catalyzes the conversion of PRFAR and glutamine to IGP, AICAR and glutamate. The HisF subunit catalyzes the cyclization activity that produces IGP and AICAR from PRFAR using the ammonia provided by the HisH subunit. The polypeptide is Imidazole glycerol phosphate synthase subunit HisF (Photobacterium profundum (strain SS9)).